Reading from the N-terminus, the 705-residue chain is Translation initiation factor IF-2 (705 aa).

Residues aspartate 40–serine 124 are disordered. Over residues aspartate 41–asparagine 58 the composition is skewed to basic and acidic residues. The span at lysine 59 to glycine 77 shows a compositional bias: low complexity. The span at lysine 94–lysine 108 shows a compositional bias: basic residues. A tr-type G domain is found at glutamate 207–lysine 376. The G1 stretch occupies residues glycine 216–threonine 223. A GTP-binding site is contributed by glycine 216–threonine 223. Residues glycine 241 to histidine 245 form a G2 region. Positions aspartate 262–glycine 265 are G3. Residues aspartate 262–histidine 266 and asparagine 316–aspartate 319 each bind GTP. The segment at asparagine 316–aspartate 319 is G4. Positions serine 352–leucine 354 are G5.

Belongs to the TRAFAC class translation factor GTPase superfamily. Classic translation factor GTPase family. IF-2 subfamily.

The protein localises to the cytoplasm. In terms of biological role, one of the essential components for the initiation of protein synthesis. Protects formylmethionyl-tRNA from spontaneous hydrolysis and promotes its binding to the 30S ribosomal subunits. Also involved in the hydrolysis of GTP during the formation of the 70S ribosomal complex. The polypeptide is Translation initiation factor IF-2 (Staphylococcus aureus (strain MRSA252)).